A 454-amino-acid polypeptide reads, in one-letter code: Aminodeoxychorismate synthase component 1 (454 aa).

Residues Ser37, 44–47, and 241–243 contribute to the L-tryptophan site; these read YNRF and PFS. Glu259 serves as the catalytic Proton donor. Lys275 (N6-(4-deoxychorismate)-lysine intermediate) is an active-site residue.

This sequence belongs to the anthranilate synthase component I family. In terms of assembly, monomer. Heterodimer consisting of two non-identical subunits: a glutamine amidotransferase subunit (PabA) and a aminodeoxychorismate synthase subunit (PabB). Requires Mg(2+) as cofactor.

It catalyses the reaction chorismate + L-glutamine = 4-amino-4-deoxychorismate + L-glutamate. It functions in the pathway cofactor biosynthesis; tetrahydrofolate biosynthesis; 4-aminobenzoate from chorismate: step 1/2. Functionally, part of a heterodimeric complex that catalyzes the two-step biosynthesis of 4-amino-4-deoxychorismate (ADC), a precursor of p-aminobenzoate (PABA) and tetrahydrofolate. In the first step, a glutamine amidotransferase (PabA) generates ammonia as a substrate that, along with chorismate, is used in the second step, catalyzed by aminodeoxychorismate synthase (PabB) to produce ADC. In Salmonella typhimurium (strain LT2 / SGSC1412 / ATCC 700720), this protein is Aminodeoxychorismate synthase component 1 (pabB).